The primary structure comprises 253 residues: Cyclin-C1-1 (253 aa).

Belongs to the cyclin family. Cyclin C subfamily.

In Arabidopsis thaliana (Mouse-ear cress), this protein is Cyclin-C1-1 (CYCC1-1).